The sequence spans 492 residues: MANYFNTLNLRQQLDQLGKCRFMGRDEFADEASYLKGKKVVIVGCGAQGLNQGLNMRDSGLDIAYALRAEAIAEKRASWRKATENGFTVGTYEDLIPQADLVVNLTPDKQHSAVVQAVQPLMKQGAALGYSHGFNIVEVGEQIRKDITVVMVAPKCPGTEVREEYKRGFGVPTLIAVHPENDPKGEGMAIAKAWAAATGGHRAGVLQSSFVAEVKSDLMGEQTILCGMLQAGSLLSFDKLVAEGTDPAYAEKLIQFGWETITEALKQGGITLMMDRLSNPAKLRAYALSEQLKGIMAPLFQKHMDDIISGEFSSGMMADWANDDVKLLTWREETGKTAFENAPQFDGKIAEQEYFDNGVLMVAMVKAGVELAFETMVSSGIIEESAYYESLHELPLIANTIARKRLYEMNVVISDTAEYGNYLFANAAVPLLKDAFMASLQPGDLGKAVAGTEVDNAQLRDVNEAIRNHPIETVGQTLRGYMKDMKRIAVAG.

The KARI N-terminal Rossmann domain maps to 14–208 (LDQLGKCRFM…GGHRAGVLQS (195 aa)). Residues 45-48 (CGAQ), Arg-68, Arg-76, Ser-78, and 108-110 (DKQ) contribute to the NADP(+) site. Residue His-132 is part of the active site. Residue Gly-158 participates in NADP(+) binding. 2 KARI C-terminal knotted domains span residues 209–344 (SFVA…NAPQ) and 345–485 (FDGK…MKDM). 4 residues coordinate Mg(2+): Asp-217, Glu-221, Glu-389, and Glu-393. Ser-414 serves as a coordination point for substrate.

Belongs to the ketol-acid reductoisomerase family. Mg(2+) serves as cofactor.

It catalyses the reaction (2R)-2,3-dihydroxy-3-methylbutanoate + NADP(+) = (2S)-2-acetolactate + NADPH + H(+). The enzyme catalyses (2R,3R)-2,3-dihydroxy-3-methylpentanoate + NADP(+) = (S)-2-ethyl-2-hydroxy-3-oxobutanoate + NADPH + H(+). It participates in amino-acid biosynthesis; L-isoleucine biosynthesis; L-isoleucine from 2-oxobutanoate: step 2/4. Its pathway is amino-acid biosynthesis; L-valine biosynthesis; L-valine from pyruvate: step 2/4. Functionally, involved in the biosynthesis of branched-chain amino acids (BCAA). Catalyzes an alkyl-migration followed by a ketol-acid reduction of (S)-2-acetolactate (S2AL) to yield (R)-2,3-dihydroxy-isovalerate. In the isomerase reaction, S2AL is rearranged via a Mg-dependent methyl migration to produce 3-hydroxy-3-methyl-2-ketobutyrate (HMKB). In the reductase reaction, this 2-ketoacid undergoes a metal-dependent reduction by NADPH to yield (R)-2,3-dihydroxy-isovalerate. This chain is Ketol-acid reductoisomerase (NADP(+)), found in Pectobacterium carotovorum subsp. carotovorum (strain PC1).